The primary structure comprises 168 residues: Cyclic pyranopterin monophosphate synthase (168 aa).

Residues 83 to 85 (LCH) and 121 to 122 (ME) contribute to the substrate site. Asp136 is a catalytic residue.

Belongs to the MoaC family. In terms of assembly, homohexamer; trimer of dimers.

The catalysed reaction is (8S)-3',8-cyclo-7,8-dihydroguanosine 5'-triphosphate = cyclic pyranopterin phosphate + diphosphate. The protein operates within cofactor biosynthesis; molybdopterin biosynthesis. Functionally, catalyzes the conversion of (8S)-3',8-cyclo-7,8-dihydroguanosine 5'-triphosphate to cyclic pyranopterin monophosphate (cPMP). This is Cyclic pyranopterin monophosphate synthase from Nostoc sp. (strain PCC 7120 / SAG 25.82 / UTEX 2576).